The chain runs to 263 residues: Acetylglutamate kinase (263 aa).

Substrate-binding positions include 48–49 (GG), Arg-70, and Asn-162.

The protein belongs to the acetylglutamate kinase family. ArgB subfamily.

The protein localises to the cytoplasm. It carries out the reaction N-acetyl-L-glutamate + ATP = N-acetyl-L-glutamyl 5-phosphate + ADP. The protein operates within amino-acid biosynthesis; L-arginine biosynthesis; N(2)-acetyl-L-ornithine from L-glutamate: step 2/4. Catalyzes the ATP-dependent phosphorylation of N-acetyl-L-glutamate. The protein is Acetylglutamate kinase of Vibrio parahaemolyticus serotype O3:K6 (strain RIMD 2210633).